Reading from the N-terminus, the 219-residue chain is Uridylate kinase (219 aa).

9–10 provides a ligand contact to ATP; sequence GS. Position 41 (Gly41) interacts with UMP. Residues Gly42 and Arg46 each coordinate ATP. UMP-binding positions include Asp63 and 110 to 116; that span reads TFPGHTT. 4 residues coordinate ATP: Thr136, Asn137, Tyr142, and Asp145.

This sequence belongs to the UMP kinase family. In terms of assembly, homohexamer.

The protein resides in the cytoplasm. The catalysed reaction is UMP + ATP = UDP + ADP. It participates in pyrimidine metabolism; CTP biosynthesis via de novo pathway; UDP from UMP (UMPK route): step 1/1. Its activity is regulated as follows. Inhibited by UTP. Functionally, catalyzes the reversible phosphorylation of UMP to UDP. This is Uridylate kinase from Archaeoglobus fulgidus (strain ATCC 49558 / DSM 4304 / JCM 9628 / NBRC 100126 / VC-16).